Consider the following 415-residue polypeptide: Trehalose synthase (415 aa).

Belongs to the glycosyltransferase group 1 family. Glycosyltransferase 4 subfamily. In terms of assembly, homodimer. Requires Mg(2+) as cofactor.

It catalyses the reaction an NDP-alpha-D-glucose + D-glucose = alpha,alpha-trehalose + a ribonucleoside 5'-diphosphate + H(+). Synthesizes trehalose from ADP-, UDP- or GDP-glucose and glucose. This Pyrococcus horikoshii (strain ATCC 700860 / DSM 12428 / JCM 9974 / NBRC 100139 / OT-3) protein is Trehalose synthase.